The following is a 432-amino-acid chain: Gamma-glutamyl phosphate reductase (432 aa).

The protein belongs to the gamma-glutamyl phosphate reductase family.

Its subcellular location is the cytoplasm. The catalysed reaction is L-glutamate 5-semialdehyde + phosphate + NADP(+) = L-glutamyl 5-phosphate + NADPH + H(+). It functions in the pathway amino-acid biosynthesis; L-proline biosynthesis; L-glutamate 5-semialdehyde from L-glutamate: step 2/2. In terms of biological role, catalyzes the NADPH-dependent reduction of L-glutamate 5-phosphate into L-glutamate 5-semialdehyde and phosphate. The product spontaneously undergoes cyclization to form 1-pyrroline-5-carboxylate. In Clavibacter michiganensis subsp. michiganensis (strain NCPPB 382), this protein is Gamma-glutamyl phosphate reductase.